The primary structure comprises 152 residues: MSIKNKFKSFFTLDDEEYEYEYIDEEREPVQEEKGTKDKAAFQERPQTGKQNVVSLQSVQKSSKVVLSEPRVYAEAQEIADHIKNRRAVVVNLQRIQHDQAKRIIDFLSGTVYAIGGDIQRIGSNIFLCTPDNVDVSGTISELLTEEEPQRW.

Residues 25 to 54 (EEREPVQEEKGTKDKAAFQERPQTGKQNVV) are disordered. Residues 28-42 (EPVQEEKGTKDKAAF) show a composition bias toward basic and acidic residues.

This sequence belongs to the SepF family. Homodimer. Interacts with FtsZ.

It is found in the cytoplasm. Cell division protein that is part of the divisome complex and is recruited early to the Z-ring. Probably stimulates Z-ring formation, perhaps through the cross-linking of FtsZ protofilaments. Its function overlaps with FtsA. In Bacillus pumilus (strain SAFR-032), this protein is Cell division protein SepF.